The primary structure comprises 871 residues: Metabotropic glutamate receptor 6 (871 aa).

The signal sequence occupies residues Met1–Gly23. The Extracellular portion of the chain corresponds to Ala24–Trp579. Cys51 and Cys93 are oxidised to a cystine. L-glutamate is bound by residues Ser148, Ala169–Thr171, and Tyr219. Intrachain disulfides connect Cys238–Cys530, Cys361–Cys377, Cys417–Cys424, Cys512–Cys531, Cys516–Cys534, Cys537–Cys549, and Cys552–Cys565. N-linked (GlcNAc...) asparagine glycosylation occurs at Asn290. Asp301 provides a ligand contact to L-glutamate. An L-glutamate-binding site is contributed by Lys394. 2 N-linked (GlcNAc...) asparagine glycosylation sites follow: Asn445 and Asn473. The N-linked (GlcNAc...) asparagine glycan is linked to Asn561. The helical transmembrane segment at Ala580–Met602 threads the bilayer. The Cytoplasmic segment spans residues Arg603–Glu616. The chain crosses the membrane as a helical span at residues Leu617–Ala637. Residues Glu638–Arg648 are Extracellular-facing. A helical membrane pass occupies residues Leu649–Asn667. Residues Arg668–Gln691 are Cytoplasmic-facing. The chain crosses the membrane as a helical span at residues Leu692–Ala712. Topologically, residues Gln713 to Asp742 are extracellular. Residues Leu743 to Ile764 form a helical membrane-spanning segment. Residues Lys765–Lys777 lie on the Cytoplasmic side of the membrane. A helical membrane pass occupies residues Pro778–Thr800. At Ala801–Thr813 the chain is on the extracellular side. A helical membrane pass occupies residues Leu814 to Phe839. The Cytoplasmic segment spans residues His840–Lys871. A disordered region spans residues Arg850–Lys871.

This sequence belongs to the G-protein coupled receptor 3 family. In terms of assembly, homodimer. Interacts with GPR179. Interacts with photoreceptor synaptic protein LRIT1 (via its N-terminal extracellular domain). As to expression, restricted expression in the inner nuclear layer of the retina.

It localises to the cell membrane. The protein localises to the endoplasmic reticulum membrane. Its subcellular location is the golgi apparatus membrane. The protein resides in the cell projection. It is found in the dendrite. G-protein coupled receptor for glutamate. Ligand binding causes a conformation change that triggers signaling via guanine nucleotide-binding proteins (G proteins) and modulates the activity of down-stream effectors, such as adenylate cyclase. Signaling inhibits adenylate cyclase activity. Signaling stimulates TRPM1 channel activity and Ca(2+) uptake. Required for normal vision. The sequence is that of Metabotropic glutamate receptor 6 (Grm6) from Rattus norvegicus (Rat).